The chain runs to 195 residues: Protein lin-28 homolog A (195 aa).

In terms of domain architecture, CSD spans 33 to 106; that stretch reads QGSGVCKWFN…GLESTRVTGP (74 aa). The interval 98–126 is disordered; sequence LESTRVTGPGGAPCIGSERRPKVKGQQKR. Residues 107–130 form a flexible linker region; sequence GGAPCIGSERRPKVKGQQKRRQKG. 2 CCHC-type zinc fingers span residues 131–148 and 153–170; these read DRCY…ECKL and KKCH…QCPA. Zn(2+)-binding residues include C133, C136, H141, C146, C155, C158, H163, and C168. Residues 175-195 form a disordered region; the sequence is AANLEEQPISEEQELIPETME. Residues 182–195 show a composition bias toward acidic residues; the sequence is PISEEQELIPETME.

The protein belongs to the lin-28 family. In terms of assembly, monomer.

Its subcellular location is the cytoplasm. The protein resides in the rough endoplasmic reticulum. It is found in the P-body. It localises to the stress granule. The protein localises to the nucleus. Its subcellular location is the nucleolus. RNA-binding protein that inhibits processing of pre-let-7 miRNAs and regulates translation of mRNAs that control developmental timing, pluripotency and metabolism. Seems to recognize a common structural G-quartet (G4) feature in its miRNA and mRNA targets. 'Translational enhancer' that drives specific mRNAs to polysomes and increases the efficiency of protein synthesis. Its association with the translational machinery and target mRNAs results in an increased number of initiation events per molecule of mRNA and, indirectly, in mRNA stabilization. Suppressor of microRNA (miRNA) biogenesis, including that of let-7. Binds specific target miRNA precursors (pre-miRNAs), recognizing an 5'-GGAG-3' motif found in their terminal loop, and recruits uridylyltransferase. This results in the terminal uridylation of target pre-miRNAs. Uridylated pre-miRNAs fail to be processed by Dicer and undergo degradation. Localized to the periendoplasmic reticulum area, binds to a large number of spliced mRNAs and inhibits the translation of mRNAs destined for the ER, reducing the synthesis of transmembrane proteins, ER or Golgi lumen proteins, and secretory proteins. Binds to and enhances the translation of mRNAs for several metabolic enzymes, increasing glycolysis and oxidative phosphorylation. Which, with the let-7 repression may enhance tissue repair in adult tissue. The polypeptide is Protein lin-28 homolog A (lin28a) (Xenopus tropicalis (Western clawed frog)).